The sequence spans 116 residues: MANYRDRRVGQEIMREVNDILNKRIRDPRVQGITITDVRVTGDLQQATIYYSLLSDLASEQQKAQQGLDKAKGLIRKELGQRLTLYKTPELIFERDESVQYGNHIDELIRKLNQGE.

Belongs to the RbfA family. Monomer. Binds 30S ribosomal subunits, but not 50S ribosomal subunits or 70S ribosomes.

The protein localises to the cytoplasm. In terms of biological role, one of several proteins that assist in the late maturation steps of the functional core of the 30S ribosomal subunit. Associates with free 30S ribosomal subunits (but not with 30S subunits that are part of 70S ribosomes or polysomes). Required for efficient processing of 16S rRNA. May interact with the 5'-terminal helix region of 16S rRNA. The protein is Ribosome-binding factor A of Enterococcus faecalis (strain ATCC 700802 / V583).